The sequence spans 255 residues: Thiazole synthase (255 aa).

Catalysis depends on K96, which acts as the Schiff-base intermediate with DXP. 1-deoxy-D-xylulose 5-phosphate-binding positions include G157, 183–184, and 205–206; these read AG and NT.

This sequence belongs to the ThiG family. Homotetramer. Forms heterodimers with either ThiH or ThiS.

The protein resides in the cytoplasm. It catalyses the reaction [ThiS sulfur-carrier protein]-C-terminal-Gly-aminoethanethioate + 2-iminoacetate + 1-deoxy-D-xylulose 5-phosphate = [ThiS sulfur-carrier protein]-C-terminal Gly-Gly + 2-[(2R,5Z)-2-carboxy-4-methylthiazol-5(2H)-ylidene]ethyl phosphate + 2 H2O + H(+). It functions in the pathway cofactor biosynthesis; thiamine diphosphate biosynthesis. In terms of biological role, catalyzes the rearrangement of 1-deoxy-D-xylulose 5-phosphate (DXP) to produce the thiazole phosphate moiety of thiamine. Sulfur is provided by the thiocarboxylate moiety of the carrier protein ThiS. In vitro, sulfur can be provided by H(2)S. The sequence is that of Thiazole synthase from Staphylococcus epidermidis (strain ATCC 35984 / DSM 28319 / BCRC 17069 / CCUG 31568 / BM 3577 / RP62A).